The primary structure comprises 291 residues: S-adenosylmethionine uptake transporter (291 aa).

The next 10 helical transmembrane spans lie at 4-24, 41-61, 74-91, 98-118, 121-141, 148-168, 178-198, 206-226, 237-257, and 260-280; these read ALKTYSIGIGWFLLSLVSSSA, VAFFRFFFSSIVLLPFVVYYG, ILRGLLLFFGMTSWTYGL, TATVISFSIPLFTLILAVFFL, NIIWQRWVVTIVGFVGLVITL, FNPEMLYFVLAAISFAMLDII, MISMLFYSAIVTAVVSIPAAA, LFELALLFILGSSGSLILFLL, ATAPYRYLELVISAIAAYFIF, and FPDKSTLHGAVIIIPATLFII. EamA domains are found at residues 21–141 and 160–280; these read SSSA…VITL and ISFA…LFII.

Belongs to the drug/metabolite transporter (DMT) superfamily. 10 TMS drug/metabolite exporter (DME) (TC 2.A.7.3) family.

Its subcellular location is the cell inner membrane. Functionally, transports S-adenosylmethionine. The sequence is that of S-adenosylmethionine uptake transporter (sam) from Rickettsia bellii (strain RML369-C).